A 370-amino-acid chain; its full sequence is Isopentenyl-diphosphate delta-isomerase (370 aa).

A substrate-binding site is contributed by 8-9 (RK). Residues threonine 65, 66–68 (GMT), serine 99, and asparagine 127 contribute to the FMN site. 99–101 (SQR) contacts substrate. Glutamine 166 lines the substrate pocket. Glutamate 167 contributes to the Mg(2+) binding site. Residues lysine 198, serine 223, threonine 228, 277-279 (GMR), and 298-299 (AL) contribute to the FMN site.

This sequence belongs to the IPP isomerase type 2 family. Homooctamer. Dimer of tetramers. FMN is required as a cofactor. NADPH serves as cofactor. It depends on Mg(2+) as a cofactor.

The protein localises to the cytoplasm. The enzyme catalyses isopentenyl diphosphate = dimethylallyl diphosphate. Its function is as follows. Involved in the biosynthesis of isoprenoids. Catalyzes the 1,3-allylic rearrangement of the homoallylic substrate isopentenyl (IPP) to its allylic isomer, dimethylallyl diphosphate (DMAPP). This is Isopentenyl-diphosphate delta-isomerase from Pyrococcus abyssi (strain GE5 / Orsay).